Here is an 87-residue protein sequence, read N- to C-terminus: Insertion element IS407 uncharacterized 10.0 kDa protein (87 aa).

Belongs to the transposase 8 family.

The protein is Insertion element IS407 uncharacterized 10.0 kDa protein of Burkholderia multivorans (strain ATCC 17616 / 249).